The following is a 286-amino-acid chain: Oxidase hkm6 (286 aa).

Cu cation is bound by residues histidine 16, histidine 25, and histidine 215.

The protein belongs to the tyrosinase family. The cofactor is Cu(2+).

The protein operates within secondary metabolite biosynthesis. Its function is as follows. Oxidase; part of the gene cluster that mediates the biosynthesis of hancockiamides, an unusual new family of N-cinnamoylated piperazines. The NRPS hkm10 and the NmrA-like reductase hkm9 are proposed to convert two molecules of L-Phe to the intermediary piperazine called xenocockiamide A. Xenocockiamide A is then converted to hancockiamide D via a series of hydroxylations and O-methylations. The tyrosinase hkm6 may catalyze an aromatic hydroxylation, then the 2-oxoglutarate-dependent Fe(II) dioxygenase hkm4 and the FAD-dependent phenol hydroxylase hkm7 may catalyze consecutive hydroxylations to install 2 more hydroxy groups, and the methyltransferase hkm8 probably catalyzes two methylations using 2 molecules of S-adenosyl-L-methionine (SAM). The NRPS hkm11 activates and transfers trans-cinnamate supplied by the PAL hkm12 to hancockiamide D and produces hancockiamide A. NRPS Hkm11 has the flexibility to tolerate the bulky hancockiamide G as a substrate and the absence of the acetyl-transferase hkm3 opens up the opportunity for hkm11 to introduce a second N-cinnamoyl moiety. The cytochrome P450 monooxygenase hkm5 catalyzes the methylenedioxy bridge formation, converting hancockiamide A into hancockiamide G. Hkm5 can also convert hancockiamide B into hancockiamide C, and hancockiamide D into hancockiamide H. The N-acetyltransferase hkm3 finally transfers an acetyl group to 1-N of piperazine, converting hancockiamide A into hancockiamide B and hancockiamide G into hancockiamide C. This chain is Oxidase hkm6, found in Aspergillus hancockii.